Here is a 337-residue protein sequence, read N- to C-terminus: Ribosomal RNA small subunit methyltransferase H (337 aa).

Residues 35–37, Asp-54, Phe-81, Asp-102, and Gln-109 contribute to the S-adenosyl-L-methionine site; that span reads GGY. Residues 286–316 are disordered; the sequence is PVGPSEAEAAANPRARSAKLRAGERTDAPAP. Low complexity predominate over residues 289–300; the sequence is PSEAEAAANPRA.

This sequence belongs to the methyltransferase superfamily. RsmH family.

The protein resides in the cytoplasm. The enzyme catalyses cytidine(1402) in 16S rRNA + S-adenosyl-L-methionine = N(4)-methylcytidine(1402) in 16S rRNA + S-adenosyl-L-homocysteine + H(+). In terms of biological role, specifically methylates the N4 position of cytidine in position 1402 (C1402) of 16S rRNA. This chain is Ribosomal RNA small subunit methyltransferase H, found in Methylobacterium sp. (strain 4-46).